The following is a 506-amino-acid chain: Lysine--tRNA ligase (506 aa).

2 residues coordinate Mg(2+): Glu416 and Glu423.

This sequence belongs to the class-II aminoacyl-tRNA synthetase family. As to quaternary structure, homodimer. It depends on Mg(2+) as a cofactor.

Its subcellular location is the cytoplasm. It carries out the reaction tRNA(Lys) + L-lysine + ATP = L-lysyl-tRNA(Lys) + AMP + diphosphate. The sequence is that of Lysine--tRNA ligase from Bordetella bronchiseptica (strain ATCC BAA-588 / NCTC 13252 / RB50) (Alcaligenes bronchisepticus).